A 182-amino-acid chain; its full sequence is UPF0301 protein MCA0413 1 (182 aa).

The protein belongs to the UPF0301 (AlgH) family.

The polypeptide is UPF0301 protein MCA0413 1 (Methylococcus capsulatus (strain ATCC 33009 / NCIMB 11132 / Bath)).